A 125-amino-acid chain; its full sequence is Holo-[acyl-carrier-protein] synthase (125 aa).

Residues Asp8 and Glu57 each contribute to the Mg(2+) site.

It belongs to the P-Pant transferase superfamily. AcpS family. Mg(2+) is required as a cofactor.

Its subcellular location is the cytoplasm. The enzyme catalyses apo-[ACP] + CoA = holo-[ACP] + adenosine 3',5'-bisphosphate + H(+). Functionally, transfers the 4'-phosphopantetheine moiety from coenzyme A to a Ser of acyl-carrier-protein. In Neisseria meningitidis serogroup A / serotype 4A (strain DSM 15465 / Z2491), this protein is Holo-[acyl-carrier-protein] synthase.